Consider the following 311-residue polypeptide: Glycine--tRNA ligase alpha subunit (311 aa).

This sequence belongs to the class-II aminoacyl-tRNA synthetase family. As to quaternary structure, tetramer of two alpha and two beta subunits.

The protein localises to the cytoplasm. It carries out the reaction tRNA(Gly) + glycine + ATP = glycyl-tRNA(Gly) + AMP + diphosphate. The sequence is that of Glycine--tRNA ligase alpha subunit from Brucella anthropi (strain ATCC 49188 / DSM 6882 / CCUG 24695 / JCM 21032 / LMG 3331 / NBRC 15819 / NCTC 12168 / Alc 37) (Ochrobactrum anthropi).